A 395-amino-acid chain; its full sequence is Leukosialin (395 aa).

An N-terminal signal peptide occupies residues 1-19 (MALHLLLLFGACWVQVASP). The Extracellular segment spans residues 20–248 (DSLQRTTMLP…TRSPSQESSG (229 aa)). Positions 27 to 56 (MLPSTPHITAPSTSEAQNASPSVSVGSGTV) are enriched in polar residues. The disordered stretch occupies residues 27 to 245 (MLPSTPHITA…PITTRSPSQE (219 aa)). The segment covering 73–88 (SLTPLETTELSSLETS) has biased composition (low complexity). Composition is skewed to polar residues over residues 89–111 (AGAS…SKTS) and 145–154 (TAASTSISKG). The span at 155–166 (TSAPPTTVTTSS) shows a compositional bias: low complexity. An N-linked (GlcNAc...) asparagine glycan is attached at Asn167. The segment covering 167–196 (NETSGPSVATTVSSKTSGPPVTTATGSLGP) has biased composition (polar residues). Positions 205-241 (ATTATSSVESSSVARGTSVSSRKTSTTSTQDPITTRS) are enriched in low complexity. A helical transmembrane segment spans residues 249–271 (MLLVPMLIALVVVLALVALLLLW). A required for interaction with EZR, MSN and RDX and for co-localization to microvilli region spans residues 272–302 (RQRQKRRTGALTLSGGGKRNGVVDAWAGPAR). The Cytoplasmic portion of the chain corresponds to 272–395 (RQRQKRRTGA…AKDEAAPQSL (124 aa)). A Nuclear localization signal motif is present at residues 276–290 (KRRTGALTLSGGGKR). Residues Ser285 and Ser328 each carry the phosphoserine modification. The disordered stretch occupies residues 303–395 (VPDEEATTTS…AKDEAAPQSL (93 aa)). Polar residues predominate over residues 327–338 (GSGQRPTLTTFF). A Phosphothreonine modification is found at Thr333. Ser339 and Ser343 each carry phosphoserine. Ser347 is modified (phosphoserine; by PKC/PRKCQ). Ser371 carries the post-translational modification Phosphoserine. The residue at position 378 (Thr378) is a Phosphothreonine. The span at 385–395 (QAKDEAAPQSL) shows a compositional bias: basic and acidic residues.

In terms of assembly, interacts with SIGLEC1. Interacts with isoform 2 of HIPK2. Interacts with CTNNB1. Interacts with RDX (via FERM domain). Interacts with EZR. Interacts with MSN. Post-translationally, phosphorylation at Ser-347 is regulated by chemokines, requires its association with ERM proteins (EZR, RDX and MSN) and is essential for its function in the regulation of T-cell trafficking to lymph nodes. In terms of processing, has a high content of sialic acid and O-linked carbohydrate structures. Cleavage by CTSG releases its extracellular domain and triggers its intramembrane proteolysis by gamma-secretase releasing the CD43 cytoplasmic tail chain (CD43-ct) which translocates to the nucleus. Post-translationally, sumoylated. Cell surface of thymocytes, T-lymphocytes, neutrophils, plasma cells and myelomas.

It localises to the membrane. It is found in the cell projection. The protein resides in the microvillus. The protein localises to the uropodium. Its subcellular location is the nucleus. It localises to the PML body. In terms of biological role, predominant cell surface sialoprotein of leukocytes which regulates multiple T-cell functions, including T-cell activation, proliferation, differentiation, trafficking and migration. Positively regulates T-cell trafficking to lymph-nodes via its association with ERM proteins (EZR, RDX and MSN). Negatively regulates Th2 cell differentiation and predisposes the differentiation of T-cells towards a Th1 lineage commitment. Promotes the expression of IFN-gamma by T-cells during T-cell receptor (TCR) activation of naive cells and induces the expression of IFN-gamma by CD4(+) T-cells and to a lesser extent by CD8(+) T-cells. Plays a role in preparing T-cells for cytokine sensing and differentiation into effector cells by inducing the expression of cytokine receptors IFNGR and IL4R, promoting IFNGR and IL4R signaling and by mediating the clustering of IFNGR with TCR. Acts as a major E-selectin ligand responsible for Th17 cell rolling on activated vasculature and recruitment during inflammation. Mediates Th17 cells, but not Th1 cells, adhesion to E-selectin. Acts as a T-cell counter-receptor for SIGLEC1. Its function is as follows. Protects cells from apoptotic signals, promoting cell survival. The chain is Leukosialin (Spn) from Mus musculus (Mouse).